The sequence spans 558 residues: Proline--tRNA ligase (558 aa).

The protein belongs to the class-II aminoacyl-tRNA synthetase family. ProS type 1 subfamily. In terms of assembly, homodimer.

The protein resides in the cytoplasm. It catalyses the reaction tRNA(Pro) + L-proline + ATP = L-prolyl-tRNA(Pro) + AMP + diphosphate. Functionally, catalyzes the attachment of proline to tRNA(Pro) in a two-step reaction: proline is first activated by ATP to form Pro-AMP and then transferred to the acceptor end of tRNA(Pro). As ProRS can inadvertently accommodate and process non-cognate amino acids such as alanine and cysteine, to avoid such errors it has two additional distinct editing activities against alanine. One activity is designated as 'pretransfer' editing and involves the tRNA(Pro)-independent hydrolysis of activated Ala-AMP. The other activity is designated 'posttransfer' editing and involves deacylation of mischarged Ala-tRNA(Pro). The misacylated Cys-tRNA(Pro) is not edited by ProRS. The chain is Proline--tRNA ligase from Coprothermobacter proteolyticus (strain ATCC 35245 / DSM 5265 / OCM 4 / BT).